A 194-amino-acid polypeptide reads, in one-letter code: Mitochondrial import inner membrane translocase subunit Tim22 (194 aa).

Disulfide bonds link C69–C141 and C160–C179. 3 helical membrane-spanning segments follow: residues 74–94 (ALAC…TAGI), 123–143 (MSYA…ECLV), and 170–190 (AGLK…AAID).

It belongs to the Tim17/Tim22/Tim23 family. Component of the TIM22 complex, whose core is composed of TIMM22, associated with peripheral protein FXC1/TIMM10B and the 70 kDa heterohexamer. In most cases, the 70 kDa complex is composed of TIMM9 and TIMM10 (TIMM10A or TIMM10B). A small fraction of the 70 kDa complex is composed of TIMM8 (TIMM8A/DDP1 or TIMM8B/DDP2) and TIMM13. The TIM22 complex also contains AGK and TIMM29. Interacts directly with TIMM9, TIMM10A and FXC1/TIMM10B. Interacts (when oxidized) with TIMM29; interaction is direct. Post-translationally, disulfide bonds promote efficient assembly of the TIM22 complex.

It is found in the mitochondrion inner membrane. Essential core component of the TIM22 complex, a complex that mediates the import and insertion of multi-pass transmembrane proteins into the mitochondrial inner membrane. In the TIM22 complex, it constitutes the voltage-activated and signal-gated channel. Forms a twin-pore translocase that uses the membrane potential as external driving force in 2 voltage-dependent steps. The polypeptide is Mitochondrial import inner membrane translocase subunit Tim22 (TIMM22) (Bos taurus (Bovine)).